Here is a 333-residue protein sequence, read N- to C-terminus: Serine/threonine-protein phosphatase 4 catalytic subunit 1 (333 aa).

The segment at methionine 1–threonine 29 is disordered. The span at aspartate 7 to leucine 27 shows a compositional bias: polar residues. 4 residues coordinate Mn(2+): aspartate 79, histidine 81, aspartate 107, and asparagine 139. Histidine 140 acts as the Proton donor in catalysis. 2 residues coordinate Mn(2+): histidine 189 and histidine 264. Leucine 333 is subject to Leucine methyl ester.

This sequence belongs to the PPP phosphatase family. PP-4 (PP-X) subfamily. In terms of assembly, serine/threonine-protein phosphatase 4 (PP4) occurs in different assemblies of the catalytic and one or more regulatory subunits. The regulatory subunits are likely to be ppfr-1, ppfr-2, ppfr-4 and smk-1. Interacts with mei-1. The cofactor is Mn(2+). Post-translationally, methylation at the C-terminal Leu-333 is critical for interactions with regulatory subunits.

Its subcellular location is the cytoplasm. The protein localises to the cytoskeleton. The protein resides in the microtubule organizing center. It is found in the centrosome. The enzyme catalyses O-phospho-L-seryl-[protein] + H2O = L-seryl-[protein] + phosphate. It catalyses the reaction O-phospho-L-threonyl-[protein] + H2O = L-threonyl-[protein] + phosphate. Protein phosphatase which plays an essential role in meiosis and in early embryonic mitosis. During spermatocyte meiosis and the first embryonic mitosis, regulates centrosome maturation, and thus spindle formation, by recruiting some of the components of the pericentriolar material (PCM). During oocyte meiosis I, regulates meiotic chromosome dynamics including synapsis-independent chromosome pairing, restriction of synapsis to homologous chromosomes, programmed DNA double-strand break initiation and crossover formation resulting in chiasma formation. During oocyte meiosis II and probably together with regulatory subunit ppfr-1, may regulate microtubule severing by dephosphorylating and activating mei-1, a component of the katanin microtubule severing complex. This is Serine/threonine-protein phosphatase 4 catalytic subunit 1 (pph-4.1) from Caenorhabditis briggsae.